The following is a 336-amino-acid chain: Glyceraldehyde-3-phosphate dehydrogenase (336 aa).

NAD(+) contacts are provided by residues 12–13 (RI), aspartate 34, and serine 120. D-glyceraldehyde 3-phosphate-binding positions include 150 to 152 (SCT), threonine 181, arginine 198, 211 to 212 (TG), and arginine 234. Cysteine 151 (nucleophile) is an active-site residue. Residue asparagine 316 coordinates NAD(+).

This sequence belongs to the glyceraldehyde-3-phosphate dehydrogenase family. Homotetramer.

Its subcellular location is the cytoplasm. The enzyme catalyses D-glyceraldehyde 3-phosphate + phosphate + NAD(+) = (2R)-3-phospho-glyceroyl phosphate + NADH + H(+). It functions in the pathway carbohydrate degradation; glycolysis; pyruvate from D-glyceraldehyde 3-phosphate: step 1/5. In terms of biological role, catalyzes the oxidative phosphorylation of glyceraldehyde 3-phosphate (G3P) to 1,3-bisphosphoglycerate (BPG) using the cofactor NAD. The first reaction step involves the formation of a hemiacetal intermediate between G3P and a cysteine residue, and this hemiacetal intermediate is then oxidized to a thioester, with concomitant reduction of NAD to NADH. The reduced NADH is then exchanged with the second NAD, and the thioester is attacked by a nucleophilic inorganic phosphate to produce BPG. This is Glyceraldehyde-3-phosphate dehydrogenase (gapA) from Staphylococcus aureus.